A 226-amino-acid polypeptide reads, in one-letter code: 7-cyano-7-deazaguanine synthase (226 aa).

7-17 provides a ligand contact to ATP; that stretch reads ISGGMDSLVVA. Residues Cys187, Cys195, Cys198, and Cys201 each contribute to the Zn(2+) site.

Belongs to the QueC family. Zn(2+) serves as cofactor.

The enzyme catalyses 7-carboxy-7-deazaguanine + NH4(+) + ATP = 7-cyano-7-deazaguanine + ADP + phosphate + H2O + H(+). It participates in purine metabolism; 7-cyano-7-deazaguanine biosynthesis. In terms of biological role, catalyzes the ATP-dependent conversion of 7-carboxy-7-deazaguanine (CDG) to 7-cyano-7-deazaguanine (preQ(0)). The chain is 7-cyano-7-deazaguanine synthase from Chlorobium phaeobacteroides (strain BS1).